Consider the following 462-residue polypeptide: Argininosuccinate lyase (462 aa).

It belongs to the lyase 1 family. Argininosuccinate lyase subfamily.

The protein localises to the cytoplasm. The enzyme catalyses 2-(N(omega)-L-arginino)succinate = fumarate + L-arginine. Its pathway is amino-acid biosynthesis; L-arginine biosynthesis; L-arginine from L-ornithine and carbamoyl phosphate: step 3/3. This chain is Argininosuccinate lyase, found in Prochlorococcus marinus (strain SARG / CCMP1375 / SS120).